Consider the following 170-residue polypeptide: Co-chaperone protein HscB homolog (170 aa).

The 75-residue stretch at 5 to 79 folds into the J domain; it reads DHFSLFGLPA…RARYLCEQAG (75 aa).

It belongs to the HscB family. In terms of assembly, interacts with HscA and stimulates its ATPase activity.

Its function is as follows. Co-chaperone involved in the maturation of iron-sulfur cluster-containing proteins. Seems to help targeting proteins to be folded toward HscA. The protein is Co-chaperone protein HscB homolog of Bordetella parapertussis (strain 12822 / ATCC BAA-587 / NCTC 13253).